The following is a 1460-amino-acid chain: Probable outer membrane protein PmpC (1460 aa).

The N-terminal stretch at 1–20 is a signal peptide; it reads MKFLSATAVFAAALPSITSA. 5 disordered regions span residues 21-48, 92-212, 279-372, 455-549, and 993-1021; these read SSVE…FTEI, SEEN…PDKD, TPPA…ESGS, TPEE…DSSI, and VDTS…TAQA. Over residues 34 to 44 the composition is skewed to low complexity; the sequence is SSRTGSSSSQS. Polar residues predominate over residues 97–114; it reads QASFQDSAQNQTENASEG. Residues 115-137 show a composition bias toward low complexity; the sequence is NSPNSENTNQSSTTETESITTDE. A compositionally biased stretch (polar residues) spans 138–155; that stretch reads QVQNDNESAASVPTTVET. Positions 290 to 327 are enriched in low complexity; it reads NDPSGSNGNDGSDDSNSSGNTDSNESNPNNSASNNTGS. Positions 328-358 are enriched in polar residues; the sequence is ENELSSSTPSAQLPNPATPFLSSVSTNSQPI. A compositionally biased stretch (low complexity) spans 461–471; that stretch reads LKSSQLNNQNP. A compositionally biased stretch (polar residues) spans 487-501; sequence SLETSPITNQDSASS. 2 stretches are compositionally biased toward low complexity: residues 504–548 and 995–1018; these read AIFR…SDSS and TSTN…STPT. Positions 1167 to 1460 constitute an Autotransporter domain; it reads DEVAYNNLWI…MINCGARMTF (294 aa).

Belongs to the PMP outer membrane protein family.

It localises to the secreted. Its subcellular location is the cell wall. It is found in the cell outer membrane. The sequence is that of Probable outer membrane protein PmpC (pmpC) from Chlamydia muridarum (strain MoPn / Nigg).